The sequence spans 160 residues: Transcription elongation factor GreA (160 aa).

The stretch at 1 to 71 forms a coiled coil; that stretch reads MAEKTYPMTL…GQISTLETKI (71 aa).

Belongs to the GreA/GreB family.

Functionally, necessary for efficient RNA polymerase transcription elongation past template-encoded arresting sites. The arresting sites in DNA have the property of trapping a certain fraction of elongating RNA polymerases that pass through, resulting in locked ternary complexes. Cleavage of the nascent transcript by cleavage factors such as GreA or GreB allows the resumption of elongation from the new 3'terminus. GreA releases sequences of 2 to 3 nucleotides. The sequence is that of Transcription elongation factor GreA from Streptococcus pyogenes serotype M3 (strain ATCC BAA-595 / MGAS315).